Consider the following 219-residue polypeptide: Uracil-DNA glycosylase (219 aa).

Catalysis depends on D61, which acts as the Proton acceptor.

It belongs to the uracil-DNA glycosylase (UDG) superfamily. UNG family.

The protein localises to the cytoplasm. It catalyses the reaction Hydrolyzes single-stranded DNA or mismatched double-stranded DNA and polynucleotides, releasing free uracil.. Functionally, excises uracil residues from the DNA which can arise as a result of misincorporation of dUMP residues by DNA polymerase or due to deamination of cytosine. This is Uracil-DNA glycosylase from Neisseria gonorrhoeae (strain ATCC 700825 / FA 1090).